A 396-amino-acid polypeptide reads, in one-letter code: MEHALQEIKRGADELLVEAELVEKLKTGRPLRIKAGFDPTAPDLHLGHTVLLNKLRQFQVLGHRIVFLIGDFTGMIGDPTGKNATRPPLTREAVAENAKTYQEQVFKVLDPALTEVRFNSEWMEGLGSVGMIRLAATHTVARMLERDDFQKRYSSQKPIAIHEFLYPLIQGYDSVELKADVELGGTDQKFNLLMGRELQKHYGQPPQCILTMPLLEGTDGVNKMSKSLGNYIGINEAPGQIFGKLMSISDALMWRYIDLLSFESIARIEGWRSDVAAGLNPREVKVAFAQEIVGRFHGDKAARDAVAEFEARFQRGVLPDDMPEVDLHGIDGGLPVPQLLKQAGLVSSTSDAIRQIAGGGVRLDGERVTDKGQSVPAGATVVAQVGKRKFARVTVI.

Positions 39–48 (PTAPDLHLGH) match the 'HIGH' region motif. The short motif at 223–227 (KMSKS) is the 'KMSKS' region element. Residue lysine 226 coordinates ATP. In terms of domain architecture, S4 RNA-binding spans 334 to 395 (LPVPQLLKQA…GKRKFARVTV (62 aa)).

Belongs to the class-I aminoacyl-tRNA synthetase family. TyrS type 2 subfamily. Homodimer.

Its subcellular location is the cytoplasm. The enzyme catalyses tRNA(Tyr) + L-tyrosine + ATP = L-tyrosyl-tRNA(Tyr) + AMP + diphosphate + H(+). Its function is as follows. Catalyzes the attachment of tyrosine to tRNA(Tyr) in a two-step reaction: tyrosine is first activated by ATP to form Tyr-AMP and then transferred to the acceptor end of tRNA(Tyr). The protein is Tyrosine--tRNA ligase of Thiobacillus denitrificans (strain ATCC 25259 / T1).